Consider the following 188-residue polypeptide: Deoxyuridine 5'-triphosphate nucleotidohydrolase (188 aa).

Residues 1 to 34 (MGEMTSGVDGHGSTKRTTSEAQKMDFNTDRGSAI) are disordered.

Belongs to the dUTPase family. Requires Mg(2+) as cofactor.

The catalysed reaction is dUTP + H2O = dUMP + diphosphate + H(+). Its function is as follows. This enzyme is involved in nucleotide metabolism: it produces dUMP, the immediate precursor of thymidine nucleotides and it decreases the intracellular concentration of dUTP so that uracil cannot be incorporated into DNA. This chain is Deoxyuridine 5'-triphosphate nucleotidohydrolase (49), found in Ictaluridae (bullhead catfishes).